The following is an 843-amino-acid chain: Eisosome protein 1 (843 aa).

Positions 1-54 (MSLISAVEDRDIHNIGKTSGGGSRTSSINSSKKSLKHGSKSLRKPKVYQTTGEP) are disordered. Ser-2 is subject to N-acetylserine. Phosphoserine is present on Ser-2. A compositionally biased stretch (basic residues) spans 33–46 (KSLKHGSKSLRKPK). 2 positions are modified to phosphoserine: Ser-88 and Ser-130. Positions 120–176 (KMGPKVVRNNSITSATSKTSKESQTKRKSKESPGAAASKAYSMTMETTSLSSQTNSR) are disordered. Polar residues-rich tracts occupy residues 127–137 (RNNSITSATSK) and 163–176 (TMET…TNSR). 4 positions are modified to phosphoserine: Ser-182, Ser-401, Ser-584, and Ser-710. A disordered region spans residues 717–843 (DLPTQLEKIE…QDAISNQEKK (127 aa)). Thr-720 is subject to Phosphothreonine. The span at 752 to 764 (STAAKEATETSSA) shows a compositional bias: low complexity. Ser-763 and Ser-775 each carry phosphoserine. A compositionally biased stretch (basic and acidic residues) spans 781 to 797 (SGKEDANDCKSAEHSKE). Over residues 798–810 (ISVSQKAGNNKSL) the composition is skewed to polar residues. Phosphoserine is present on residues Ser-816, Ser-828, Ser-829, and Ser-838.

This sequence belongs to the EIS1 family.

It is found in the cytoplasmic granule. The protein resides in the cell membrane. Functionally, required for normal formation of eisosomes, large cytoplasmic protein assemblies that localize to specialized domains on plasma membrane and mark the site of endocytosis. The protein is Eisosome protein 1 (EIS1) of Saccharomyces cerevisiae (strain JAY291) (Baker's yeast).